A 267-amino-acid chain; its full sequence is Hydroxyethylthiazole kinase 2 (267 aa).

Substrate is bound at residue M41. Positions 116 and 166 each coordinate ATP. Residue G193 participates in substrate binding.

This sequence belongs to the Thz kinase family. The cofactor is Mg(2+).

The catalysed reaction is 5-(2-hydroxyethyl)-4-methylthiazole + ATP = 4-methyl-5-(2-phosphooxyethyl)-thiazole + ADP + H(+). It functions in the pathway cofactor biosynthesis; thiamine diphosphate biosynthesis; 4-methyl-5-(2-phosphoethyl)-thiazole from 5-(2-hydroxyethyl)-4-methylthiazole: step 1/1. In terms of biological role, catalyzes the phosphorylation of the hydroxyl group of 4-methyl-5-beta-hydroxyethylthiazole (THZ). The sequence is that of Hydroxyethylthiazole kinase 2 from Streptococcus pneumoniae (strain JJA).